The chain runs to 148 residues: uncharacterized protein (148 aa).

CBS domains are found at residues 8–68 (MTAD…PNSQ) and 74–130 (MTEK…ERAG). Residues 127 to 148 (ERAGSALSDISEGDNREEGFFH) form a disordered region. Residues 139–148 (GDNREEGFFH) are compositionally biased toward basic and acidic residues.

This is an uncharacterized protein from Bacillus subtilis (strain 168).